The following is a 339-amino-acid chain: Phomopsene synthase (339 aa).

Residues Asp89, Asp94, Asn224, Ser228, and Glu232 each coordinate Mg(2+).

The protein belongs to the terpene synthase family. Mg(2+) serves as cofactor.

It catalyses the reaction (2E,6E,10E)-geranylgeranyl diphosphate = phomopsene + diphosphate. The enzyme catalyses (2E,6E,10E)-geranylgeranyl diphosphate = allokutznerene + diphosphate. It participates in secondary metabolite biosynthesis; terpenoid biosynthesis. Diterpene synthase that catalyzes the conversion of geranylgeranyl diphosphate (GGPP) to phomopsene, a diterpene previously reported from the fungus P.amygdali. Phomopsene is the main product, but the enzyme can also produce allokutznerene (about 50% of phomopsene production activity) and traces of spiroviolene. Cannot use geranyl diphosphate (GPP), farnesyl diphosphate (FPP) and geranylfarnesyl diphosphate (GFPP). The polypeptide is Phomopsene synthase (Allokutzneria albata (Kibdelosporangium albatum)).